A 279-amino-acid chain; its full sequence is Acyl-[acyl-carrier-protein]--UDP-N-acetylglucosamine O-acyltransferase (279 aa).

This sequence belongs to the transferase hexapeptide repeat family. LpxA subfamily. Homotrimer.

The protein localises to the cytoplasm. The enzyme catalyses a (3R)-hydroxyacyl-[ACP] + UDP-N-acetyl-alpha-D-glucosamine = a UDP-3-O-[(3R)-3-hydroxyacyl]-N-acetyl-alpha-D-glucosamine + holo-[ACP]. The protein operates within glycolipid biosynthesis; lipid IV(A) biosynthesis; lipid IV(A) from (3R)-3-hydroxytetradecanoyl-[acyl-carrier-protein] and UDP-N-acetyl-alpha-D-glucosamine: step 1/6. Functionally, involved in the biosynthesis of lipid A, a phosphorylated glycolipid that anchors the lipopolysaccharide to the outer membrane of the cell. The sequence is that of Acyl-[acyl-carrier-protein]--UDP-N-acetylglucosamine O-acyltransferase from Mesorhizobium japonicum (strain LMG 29417 / CECT 9101 / MAFF 303099) (Mesorhizobium loti (strain MAFF 303099)).